Consider the following 105-residue polypeptide: V-type ATP synthase subunit F (105 aa).

Belongs to the V-ATPase F subunit family.

Produces ATP from ADP in the presence of a proton gradient across the membrane. The protein is V-type ATP synthase subunit F of Fusobacterium nucleatum subsp. nucleatum (strain ATCC 25586 / DSM 15643 / BCRC 10681 / CIP 101130 / JCM 8532 / KCTC 2640 / LMG 13131 / VPI 4355).